Consider the following 112-residue polypeptide: Lutropin subunit beta (112 aa).

Cystine bridges form between Cys4–Cys52, Cys18–Cys67, Cys21–Cys105, Cys29–Cys83, Cys33–Cys85, and Cys88–Cys95. N-linked (GlcNAc...) asparagine glycosylation occurs at Asn8.

The protein belongs to the glycoprotein hormones subunit beta family. Heterodimer of a common alpha chain and a unique beta chain which confers biological specificity to thyrotropin, lutropin, follitropin and gonadotropin.

Its subcellular location is the secreted. The protein is Lutropin subunit beta (lhb) of Aquarana catesbeiana (American bullfrog).